We begin with the raw amino-acid sequence, 308 residues long: Carbonic anhydrase 6 (308 aa).

The N-terminal stretch at 1–17 (MRALVLLLSLFLLGGQA) is a signal peptide. One can recognise an Alpha-carbonic anhydrase domain in the interval 21–278 (SDWTYSEGAL…LNHRVVESNF (258 aa)). A disulfide bridge links Cys-42 with Cys-224. Residue Asn-67 is glycosylated (N-linked (GlcNAc...) asparagine). Catalysis depends on His-85, which acts as the Proton donor/acceptor. Positions 111, 113, and 138 each coordinate Zn(2+). Residue 220 to 221 (TT) coordinates substrate. Residue Asn-256 is glycosylated (N-linked (GlcNAc...) asparagine).

It belongs to the alpha-carbonic anhydrase family. It depends on Zn(2+) as a cofactor. Major constituent of saliva.

The protein localises to the secreted. The catalysed reaction is hydrogencarbonate + H(+) = CO2 + H2O. Inhibited by coumarins, sulfonamide derivatives such as acetazolamide (AZA), saccharin and Foscarnet (phosphonoformate trisodium salt). Functionally, reversible hydration of carbon dioxide. Its role in saliva is unknown. The sequence is that of Carbonic anhydrase 6 (CA6) from Homo sapiens (Human).